Here is a 333-residue protein sequence, read N- to C-terminus: Isoaspartyl peptidase/L-asparaginase (333 aa).

Threonine 191 (nucleophile) is an active-site residue. Substrate-binding positions include 219 to 222 (RVGD) and 242 to 245 (TGHG).

Belongs to the Ntn-hydrolase family. In terms of assembly, heterodimer of an alpha and beta chain produced by autocleavage. This heterodimer may then dimerize in turn, giving rise to a heterotetramer. Post-translationally, cleaved into an alpha and beta chain by autocatalysis; this activates the enzyme. The N-terminal residue of the beta subunit is responsible for the nucleophile hydrolase activity. As to expression, present in testis, brain, liver, kidney, heart and skeletal muscle. In brain, specifically present in the astrocytic lineage. Present in sperm (at protein level).

It is found in the cytoplasm. The enzyme catalyses L-asparagine + H2O = L-aspartate + NH4(+). It catalyses the reaction Cleavage of a beta-linked Asp residue from the N-terminus of a polypeptide.. Has both L-asparaginase and beta-aspartyl peptidase activity. Is highly active with L-Asp beta-methyl ester. Besides, has catalytic activity toward beta-aspartyl dipeptides and their methyl esters, including beta-L-Asp-L-Phe, beta-L-Asp-L-Phe methyl ester (aspartame), beta-L-Asp-L-Ala, beta-L-Asp-L-Leu and beta-L-Asp-L-Lys. Does not have aspartylglucosaminidase activity and is inactive toward GlcNAc-L-Asn. Likewise, has no activity toward glutamine. May be involved in the production of L-aspartate, which can act as an excitatory neurotransmitter in some brain regions. The polypeptide is Isoaspartyl peptidase/L-asparaginase (Asrgl1) (Rattus norvegicus (Rat)).